The primary structure comprises 1202 residues: Voltage-gated inwardly rectifying potassium channel KCNH6 (1202 aa).

At 1-405 (MGSAALPHAR…YSPFKAVWDW (405 aa)) the chain is on the cytoplasmic side. The PAS domain occupies 36–84 (IIYCNDGFCEMFGYSRVEVMQRPCTCDFLTGPDTTKSSIAQLTQALLGS). Positions 87-139 (CKLEILYYRKDTSCFRCLVDVVPVKNEDGVVIMFILNFEDLAQLIAKSSGRSL) constitute a PAC domain. Disordered stretches follow at residues 203 to 243 (ENCV…LGPR) and 285 to 315 (ERRA…SDSD). Residues 213–222 (LLEKERRPSL) show a composition bias toward basic and acidic residues. A helical membrane pass occupies residues 406–426 (LILLLVIYTAVFTPYSAAFLL). Over 427–443 (NEEQGEEKHWNCSYSCD) the chain is Extracellular. N-linked (GlcNAc...) asparagine glycosylation occurs at Asn-437. The helical transmembrane segment at 444–464 (PLNIIDLIVDIMFIVDIVINF) threads the bilayer. The Cytoplasmic portion of the chain corresponds to 465–485 (RTTYVNINDEVVSHPGKIAIH). Residues 486–506 (YFKGWFLIDMVAAIPFDLLIF) traverse the membrane as a helical segment. Over 507–515 (RSGSDETTT) the chain is Extracellular. A helical; Voltage-sensor transmembrane segment spans residues 516–536 (LIGLLKTARLLRLVRVARKLD). At 537–543 (RYSEYGA) the chain is on the cytoplasmic side. A helical transmembrane segment spans residues 544–564 (AVLFLLMCTFALIAHWLACIW). Residues 565–608 (YAIGNVERPYMEHKIGWLDNLGDQIGKRYNDSDLSSGPSIKDKY) are Extracellular-facing. Asn-594 carries an N-linked (GlcNAc...) asparagine glycan. An intramembrane region (pore-forming) is located at residues 609–629 (VTALYFTFSSLTSVGFGNVSP). The Selectivity filter motif lies at 621–626 (SVGFGN). Residues 630–635 (NTNSEK) lie on the Extracellular side of the membrane. Residues 636-656 (IFSICVMLIGSLMYASIFGNV) form a helical membrane-spanning segment. Topologically, residues 657 to 1202 (SAIIQRLYSG…HLSDPVLPGS (546 aa)) are cytoplasmic. Residues 739–839 (AFRGASKGCL…IQREDLLEVL (101 aa)) are cNMP-binding domain. Disordered stretches follow at residues 912–948 (LTNP…GSPT), 1092–1112 (TPCA…PSYA), and 1140–1202 (TVYS…LPGS). A compositionally biased stretch (polar residues) spans 928-937 (GSSTTPCSQT). Positions 1179 to 1195 (EHLEASSEHQDIQRHLS) are enriched in basic and acidic residues.

Belongs to the potassium channel family. H (Eag) (TC 1.A.1.20) subfamily. Kv11.2/KCNH6 sub-subfamily. In terms of assembly, the potassium channel is probably composed of a homo- or heterotetrameric complex of pore-forming alpha subunits that can associate only within their subfamily.

It localises to the cell membrane. It carries out the reaction K(+)(in) = K(+)(out). Pore-forming (alpha) subunit of voltage-gated inwardly rectifying potassium channel. Characterized by unusual gating kinetics by producing relatively small outward currents during membrane depolarization and large inward currents during subsequent repolarization which reflect a rapid inactivation during depolarization and quick recovery from inactivation but slow deactivation (closing) during repolarization. Activates even more slowly than KCNH2. This is Voltage-gated inwardly rectifying potassium channel KCNH6 from Gallus gallus (Chicken).